The chain runs to 311 residues: Glycine--tRNA ligase alpha subunit (311 aa).

The protein belongs to the class-II aminoacyl-tRNA synthetase family. In terms of assembly, tetramer of two alpha and two beta subunits.

Its subcellular location is the cytoplasm. It catalyses the reaction tRNA(Gly) + glycine + ATP = glycyl-tRNA(Gly) + AMP + diphosphate. This chain is Glycine--tRNA ligase alpha subunit, found in Rhizobium meliloti (strain 1021) (Ensifer meliloti).